We begin with the raw amino-acid sequence, 647 residues long: MASYKQNLPPSALIKQQVNVADKKSKAEVQRDRQLEEDRKAGTAPAMVDVQTGRDINPHIPMFISQNPWYVPSEGPTLKHQRPHEEREKKMTQIHEWYQKGTTGKSATKFRKGACENCGAMGHQKRDCFDRPRKSNAKETNDNIAEDDYVQPNLTLGFDAKRDRWNGYDPSTHKQVIEDYEHLEEARKVVREHEMKEGEVEPATTEDGAPKDEDMYAEDADMAGVSVDMDSRTRITVRNLRIREDTAKYLYNLAENSPYYDPKSRSMRENPFAGVAGKELEAARFSGDNFVRYSGEVTAANEAQVFAWQATRGGVYAHSIAEPTKLEALKKEYEKEKSTLKNETQKELLDKYGGGEHMERPADELLLAQTESYIEYNRKGKVIKGKEKVAISSRFKEDIYPQNHTSVFGSFWREGRWGYKCCHQFVKNSYCTGKQGIEAETSAAKGTTTSNEEIFKVPKLVEKTEVKEEKEKEDSIKDEVAEENSDNDNDEEKEKVSEKSISPSPPSDDEEKEKEREKERLIEKERRERDQRRRDKKREKRERKKAKLGKRKRRHRDSDDESDPSSGSGSESDSDEEMRKAMKKAKREKAEGMKAAREGDRGRKYNTDYSNTAPNEKEMEAYRVTSVHSADPMAAYMNSKFEKKHTK.

Positions 1 to 19 (MASYKQNLPPSALIKQQVN) are enriched in polar residues. The interval 1 to 44 (MASYKQNLPPSALIKQQVNVADKKSKAEVQRDRQLEEDRKAGTA) is disordered. Basic and acidic residues predominate over residues 21 to 41 (ADKKSKAEVQRDRQLEEDRKA). A CCHC-type zinc finger spans residues 113–130 (GACENCGAMGHQKRDCFD). Disordered regions lie at residues 193–212 (HEMK…APKD) and 465–620 (EVKE…KEME). Basic and acidic residues predominate over residues 465–479 (EVKEEKEKEDSIKDE). Over residues 480–491 (VAEENSDNDNDE) the composition is skewed to acidic residues. Over residues 513–533 (EKEREKERLIEKERRERDQRR) the composition is skewed to basic and acidic residues. The span at 534–555 (RDKKREKRERKKAKLGKRKRRH) shows a compositional bias: basic residues. Residues 588-606 (EKAEGMKAAREGDRGRKYN) show a composition bias toward basic and acidic residues.

It belongs to the SLU7 family.

The protein localises to the nucleus. Participates in the second catalytic step of pre-mRNA splicing, when the free hydroxyl group of exon I attacks the 3'-splice site to generate spliced mRNA and the excised lariat intron. The protein is Pre-mRNA-splicing factor SLU7 of Caenorhabditis elegans.